A 370-amino-acid chain; its full sequence is MQKIKEYIKKLEEGCDLSSEEAEAALEEVLSTAEDGEIETFLLALKAKGEKPQEIVGFVRGMKKAGNMIKPNTPFRIVDTCGTGGDGLNTINVSTAAAIVTAAAGVPVAKHGNRAATSMTGSSDVLEALGIKVDLSPEYVRKTIEKIGIGFMFAPVFHPAMKRVAGVRKKLGVRTVFNILGPLTNPAGAKGQVVGVFDKNLCEPIAYALAELGTEHALVVHGDGMDEITNTGETYVAELKNGKVSTYTLTPESLGMLRASPGDTKGGSPKENARDLLCIFKGQKGPKRDLIILNAAAALYVSGIVGSIRQAIPIAEDAIDSGKVMVKFNQFRTFTGEFYQIDKKQGFIPGKTALSPSRVSMLSPASGEQA.

Residues G82, 85–86 (GD), T90, 92–95 (NVST), 110–118 (KHGNRAATS), and S122 contribute to the 5-phospho-alpha-D-ribose 1-diphosphate site. G82 contacts anthranilate. S94 lines the Mg(2+) pocket. N113 provides a ligand contact to anthranilate. R168 is a binding site for anthranilate. Mg(2+) contacts are provided by D226 and E227.

The protein belongs to the anthranilate phosphoribosyltransferase family. As to quaternary structure, homodimer. The cofactor is Mg(2+).

The catalysed reaction is N-(5-phospho-beta-D-ribosyl)anthranilate + diphosphate = 5-phospho-alpha-D-ribose 1-diphosphate + anthranilate. The protein operates within amino-acid biosynthesis; L-tryptophan biosynthesis; L-tryptophan from chorismate: step 2/5. Its function is as follows. Catalyzes the transfer of the phosphoribosyl group of 5-phosphorylribose-1-pyrophosphate (PRPP) to anthranilate to yield N-(5'-phosphoribosyl)-anthranilate (PRA). This chain is Anthranilate phosphoribosyltransferase, found in Methanosarcina mazei (strain ATCC BAA-159 / DSM 3647 / Goe1 / Go1 / JCM 11833 / OCM 88) (Methanosarcina frisia).